The chain runs to 142 residues: Succinate dehydrogenase assembly factor 2, mitochondrial (142 aa).

It belongs to the SDHAF2 family. In terms of assembly, interacts with the flavoprotein subunit within the SDH catalytic dimer.

It localises to the mitochondrion matrix. Its function is as follows. Plays an essential role in the assembly of succinate dehydrogenase (SDH), an enzyme complex (also referred to as respiratory complex II) that is a component of both the tricarboxylic acid (TCA) cycle and the mitochondrial electron transport chain, and which couples the oxidation of succinate to fumarate with the reduction of ubiquinone (coenzyme Q) to ubiquinol. Required for flavinylation (covalent attachment of FAD) of the flavoprotein subunit of the SDH catalytic dimer. The sequence is that of Succinate dehydrogenase assembly factor 2, mitochondrial from Debaryomyces hansenii (strain ATCC 36239 / CBS 767 / BCRC 21394 / JCM 1990 / NBRC 0083 / IGC 2968) (Yeast).